A 189-amino-acid polypeptide reads, in one-letter code: Stathmin-4 (189 aa).

S-palmitoyl cysteine attachment occurs at residues Cys20 and Cys22. An SLD domain is found at 48 to 189; sequence SDMEVIELNK…NKELKEEASR (142 aa). Glu54 and Ser90 each carry phosphoserine. A coiled-coil region spans residues 90 to 189; it reads SLEEIQKKLE…NKELKEEASR (100 aa). The interval 168–189 is disordered; that stretch reads QEKDKHAEEVRKNKELKEEASR.

The protein belongs to the stathmin family. As to expression, nervous tissue.

It is found in the golgi apparatus. Its subcellular location is the cell projection. The protein localises to the growth cone. It localises to the axon. Its function is as follows. Exhibits microtubule-destabilizing activity. The protein is Stathmin-4 (Stmn4) of Rattus norvegicus (Rat).